A 430-amino-acid chain; its full sequence is Adenylosuccinate synthetase (430 aa).

GTP is bound by residues 12 to 18 (GDEGKGK) and 40 to 42 (GHT). Aspartate 13 serves as the catalytic Proton acceptor. Residues aspartate 13 and glycine 40 each contribute to the Mg(2+) site. IMP-binding positions include 13–16 (DEGK), 38–41 (NAGH), threonine 128, arginine 142, glutamine 223, threonine 238, and arginine 302. The active-site Proton donor is the histidine 41. Substrate is bound at residue 298–304 (TTTGRPR). Residues arginine 304, 330-332 (SID), and 412-414 (SVG) each bind GTP.

This sequence belongs to the adenylosuccinate synthetase family. As to quaternary structure, homodimer. Requires Mg(2+) as cofactor.

It is found in the cytoplasm. It carries out the reaction IMP + L-aspartate + GTP = N(6)-(1,2-dicarboxyethyl)-AMP + GDP + phosphate + 2 H(+). Its pathway is purine metabolism; AMP biosynthesis via de novo pathway; AMP from IMP: step 1/2. Functionally, plays an important role in the de novo pathway of purine nucleotide biosynthesis. Catalyzes the first committed step in the biosynthesis of AMP from IMP. This chain is Adenylosuccinate synthetase, found in Streptococcus pyogenes serotype M49 (strain NZ131).